Here is a 439-residue protein sequence, read N- to C-terminus: Alpha-1,3-mannosyl-glycoprotein 4-beta-N-acetylglucosaminyltransferase-like protein MGAT4E (439 aa).

Its pathway is protein modification; protein glycosylation. In terms of biological role, glycosyltransferase-like protein that may participate in the transfer of N-acetylglucosamine (GlcNAc) to the core mannose residues of N-linked glycans. In Mus musculus (Mouse), this protein is Alpha-1,3-mannosyl-glycoprotein 4-beta-N-acetylglucosaminyltransferase-like protein MGAT4E.